Here is a 1128-residue protein sequence, read N- to C-terminus: Exportin-6 (1128 aa).

The Importin N-terminal domain occupies 31 to 97; the sequence is IEELLNSFAG…RSCLPKLLLS (67 aa).

The protein belongs to the exportin family.

Its subcellular location is the nucleus. It localises to the cytoplasm. Mediates the nuclear export of actin and profilin-actin complexes in somatic cells. The protein is Exportin-6 (xpo6) of Danio rerio (Zebrafish).